A 264-amino-acid polypeptide reads, in one-letter code: Probable amino-acid-binding protein YxeM (264 aa).

An N-terminal signal peptide occupies residues 1 to 20; it reads MKMKKWTVLVVAALLAVLSA. C21 carries N-palmitoyl cysteine lipidation. C21 carries S-diacylglycerol cysteine lipidation.

It belongs to the bacterial solute-binding protein 3 family. The complex is composed of two ATP-binding proteins (YxeO), two transmembrane proteins (YxeN) and a solute-binding protein (YxeM).

The protein resides in the cell membrane. The protein localises to the membrane raft. In terms of biological role, probably part of the ABC transporter complex YxeMNO that could be involved in amino-acid import. May transport S-methylcysteine. The chain is Probable amino-acid-binding protein YxeM (yxeM) from Bacillus subtilis (strain 168).